The following is a 588-amino-acid chain: Aspartate--tRNA ligase (588 aa).

E177 lines the L-aspartate pocket. Residues Q201 to K204 form an aspartate region. Residue R223 participates in L-aspartate binding. ATP-binding positions include R223–E225 and Q232. L-aspartate is bound at residue H451. E485 is an ATP binding site. An L-aspartate-binding site is contributed by R492. G537–R540 lines the ATP pocket.

It belongs to the class-II aminoacyl-tRNA synthetase family. Type 1 subfamily. In terms of assembly, homodimer.

Its subcellular location is the cytoplasm. The enzyme catalyses tRNA(Asp) + L-aspartate + ATP = L-aspartyl-tRNA(Asp) + AMP + diphosphate. In terms of biological role, catalyzes the attachment of L-aspartate to tRNA(Asp) in a two-step reaction: L-aspartate is first activated by ATP to form Asp-AMP and then transferred to the acceptor end of tRNA(Asp). This chain is Aspartate--tRNA ligase, found in Staphylococcus haemolyticus (strain JCSC1435).